Reading from the N-terminus, the 233-residue chain is tRNA (guanine-N(7)-)-methyltransferase (233 aa).

The disordered stretch occupies residues 1 to 22; it reads MIDENHPMRAAGNFFGRRHGKP. Residues E64, E89, D116, and D138 each coordinate S-adenosyl-L-methionine. Residue D138 is part of the active site. Residues K142, D174, and 212–215 contribute to the substrate site; that span reads TRYE.

The protein belongs to the class I-like SAM-binding methyltransferase superfamily. TrmB family.

It carries out the reaction guanosine(46) in tRNA + S-adenosyl-L-methionine = N(7)-methylguanosine(46) in tRNA + S-adenosyl-L-homocysteine. It functions in the pathway tRNA modification; N(7)-methylguanine-tRNA biosynthesis. Functionally, catalyzes the formation of N(7)-methylguanine at position 46 (m7G46) in tRNA. The polypeptide is tRNA (guanine-N(7)-)-methyltransferase (Brucella melitensis biotype 1 (strain ATCC 23456 / CCUG 17765 / NCTC 10094 / 16M)).